Reading from the N-terminus, the 428-residue chain is Somatostatin receptor type 3 (428 aa).

Residues 1-12 (MATVTYPSSEPT) show a composition bias toward polar residues. Residues 1-20 (MATVTYPSSEPTTLDPGNAS) are disordered. Topologically, residues 1–45 (MATVTYPSSEPTTLDPGNASSTWPLDTTLGNTSAGASLTGLAVSG) are extracellular. Residues N18 and N31 are each glycosylated (N-linked (GlcNAc...) asparagine). The helical transmembrane segment at 46-71 (ILISLVYLVVCVVGLLGNSLVIYVVL) threads the bilayer. Topologically, residues 72 to 81 (RHTSSPSVTS) are cytoplasmic. Residues 82-103 (VYILNLALADELFMLGLPFLAA) form a helical membrane-spanning segment. Residues 104–118 (QNALSYWPFGSLMCR) lie on the Extracellular side of the membrane. Residues C117 and C192 are joined by a disulfide bond. A helical transmembrane segment spans residues 119 to 140 (LVMAVDGINQFTSIFCLTVMSV). The Cytoplasmic segment spans residues 141–162 (DRYLAVVHPTRSARWRTAPVAR). A helical membrane pass occupies residues 163-182 (TVSAAVWVASAVVVLPVVVF). Residues 183-206 (SGVPRGMSTCHMQWPEPAAAWRTA) are Extracellular-facing. The helical transmembrane segment at 207–232 (FIIYTAALGFFGPLLVICLCYLLIVV) threads the bilayer. At 233–266 (KVRSTTRRVRAPSCQWVQAPACQRRRRSERRVTR) the chain is on the cytoplasmic side. The helical transmembrane segment at 267–288 (MVVAVVALFVLCWMPFYLLNIV) threads the bilayer. At 289-302 (NVVCPLPEEPAFFG) the chain is on the extracellular side. A helical transmembrane segment spans residues 303–325 (LYFLVVALPYANSCANPILYGFL). Over 326–428 (SYRFKQGFRR…GDKASTLSHL (103 aa)) the chain is Cytoplasmic. Phosphoserine is present on residues S341, S346, and S351. Residues 344–428 (IRSQEPGSGP…GDKASTLSHL (85 aa)) form a disordered region. T357 carries the post-translational modification Phosphothreonine. Residues 357–370 (TEEEEDEEEEERRE) are compositionally biased toward acidic residues. Positions 385–412 (RLSQIAQAGTSGQQPRPCTGTAKEQQLL) are enriched in polar residues.

Belongs to the G-protein coupled receptor 1 family. Homodimer and heterodimer with SSTR2. Heterodimerization with SSTR2 inactivates SSTR3 receptor function. Phosphorylated. Phosphorylation increases upon somatostatin binding. In the brain, primarily observed in the forebrain. Moderate levels found throughout laminae 2-6 of the neocortex and allocortex, and high levels in lamina 2 of the piriform and entorhinal cortices. High levels also present in the cornu ammonis fields of the hippocampus. In the amygdala, highly expressed in the nucleus of the lateral olfactory tract with expression also detected in the rostral portions of the basal magnocellular and lateral nuclei. In the diencephalon, moderate levels observed in the ventromedial and arcuate nuclei of the hypothalamus. In the midbrain, moderate levels found in the lateral portion of the substantia nigra pars reticulata.

Its subcellular location is the cell membrane. Receptor for somatostatin-14 and -28. This receptor is coupled via pertussis toxin sensitive G proteins to inhibition of adenylyl cyclase. The protein is Somatostatin receptor type 3 (Sstr3) of Mus musculus (Mouse).